The sequence spans 268 residues: Microtubule-associated protein RP/EB family member 1 (268 aa).

N-acetylalanine is present on alanine 2. The region spanning 14–116 (NLSRHDMLAW…FVQWFKKFFD (103 aa)) is the Calponin-homology (CH) domain. An N6-crotonyllysine modification is found at lysine 66. Tyrosine 124 carries the post-translational modification Phosphotyrosine. Positions 124–268 (YDPVAARQGQ…GGPQEEQEEY (145 aa)) are interaction with MTUS2/TIP150. Residues 146–187 (LNKPKKPLTSSSAAPQRPISTQRTAAAPKAGPGVVRKNPGVG) are disordered. The span at 153–169 (LTSSSAAPQRPISTQRT) shows a compositional bias: polar residues. Phosphoserine occurs at positions 155 and 165. Residues 185 to 255 (GVGNGDDEAA…LYATDEGFVI (71 aa)) enclose the EB1 C-terminal domain. The segment at 185 to 268 (GVGNGDDEAA…GGPQEEQEEY (84 aa)) is interaction with CDK5RAP2. The tract at residues 206–211 (TVEDLE) is interaction with APC. Residues 208-268 (EDLEKERDFY…GGPQEEQEEY (61 aa)) form a DCTN1-binding region. Position 220 is an N6-acetyllysine (lysine 220). The segment at 220–242 (KLRNIELICQENEGENDPVLQRI) is APC-binding. The segment at 232 to 255 (EGENDPVLQRIVDILYATDEGFVI) is interaction with SKA1.

Belongs to the MAPRE family. Homodimer. Heterodimer with MAPRE3. Interacts with DCTN1, DCTN2, TERF1 and dynein intermediate chain. Interaction with DIAPH1 and DIAPH2. Interacts (via C-terminal residues 206-211) with APC (via C-terminal residues 2674-2843); the interaction inhibits association with and bundling of F-actin. Interacts with CLASP2, DST, KIF2C and STIM1; probably required for their targeting to the growing microtubule plus ends. Interacts with MTUS2; interaction is direct and probably targets MTUS2 to microtubules. Interacts (via C-terminus) with SKA1 (via SXIP motif); the interaction is direct and stabilizes the kinetochore-microtubule attachment of the SKA1 complex. Interacts with APC2. Interacts with CLASP1. Interacts with CDK5RAP2. Interacts with MACF1. Interacts with RABL2/RABL2A; binds preferentially to GTP-bound RABL2. Interacts with KCNAB2. Interacts (via C-terminus) with CLIP1. Interacts with SLAIN2 and SLAIN1. Interacts with KIF18B; this interaction is required for efficient accumulation of KIF18B at microtubule plus ends. Interacts with MISP. Interacts with KNSTRN. Interacts with NCKAP5L. Interacts with CAMSAP2. Interacts with PDE4DIP isoform 13/MMG8/SMYLE; this interaction is required for its recruitment to the Golgi apparatus. Forms a pericentrosomal complex with AKAP9, CDK5RAP2 and PDE4DIP isoform 13/MMG8/SMYLE; within this complex, MAPRE1 binding to CDK5RAP2 may be mediated by PDE4DIP. Interacts with AKNA. Interacts with GAS2L1, GAS2L2, and GAS2L3. Interacts with RARRES1 and AGBL2. Post-translationally, acetylation at Lys-220 by KAT2B/PCAF promotes dynamic kinetochore-microtubule interactions in early mitosis. In terms of processing, crotonylated by KAT5 during mitosis, promoting astral microtubule plasticity and dynamic connection between astral microtubules and the cortex during mitotic chromosome segregation, thereby ensuring accurate spindle positioning in mitosis. Decrotonylated by HDAC3. In terms of tissue distribution, ubiquitously expressed.

It is found in the cytoplasm. The protein localises to the cytoskeleton. It localises to the microtubule organizing center. The protein resides in the centrosome. Its subcellular location is the golgi apparatus. It is found in the spindle. The protein localises to the spindle pole. Its function is as follows. Plus-end tracking protein (+TIP) that binds to the plus-end of microtubules and regulates the dynamics of the microtubule cytoskeleton. Recruits other +TIP proteins to microtubules by binding to a conserved Ser-X-Leu-Pro (SXLP) motif in their polypeptide chains. Promotes cytoplasmic microtubule nucleation and elongation. Involved in mitotic spindle positioning by stabilizing microtubules and promoting dynamic connection between astral microtubules and the cortex during mitotic chromosome segregation. Assists chromosome alignment in metaphase by recruiting the SKA complex to the spindle and stabilizing its interactions with microtubule bundles (K-fibers). Also acts as a regulator of minus-end microtubule organization: interacts with the complex formed by AKAP9 and PDE4DIP, leading to recruit CAMSAP2 to the Golgi apparatus, thereby tethering non-centrosomal minus-end microtubules to the Golgi, an important step for polarized cell movement. Promotes elongation of CAMSAP2-decorated microtubule stretches on the minus-end of microtubules. Acts as a regulator of autophagosome transport via interaction with CAMSAP2. Functions downstream of Rho GTPases and DIAPH1 in stable microtubule formation. May play a role in cell migration. The sequence is that of Microtubule-associated protein RP/EB family member 1 from Homo sapiens (Human).